The primary structure comprises 223 residues: Triosephosphate isomerase (223 aa).

6-8 contributes to the substrate binding site; the sequence is NLK. The active-site Electrophile is the His-86. Glu-151 serves as the catalytic Proton acceptor. Substrate is bound by residues Gly-157 and Ser-187.

It belongs to the triosephosphate isomerase family. As to quaternary structure, homodimer.

The protein resides in the cytoplasm. It carries out the reaction D-glyceraldehyde 3-phosphate = dihydroxyacetone phosphate. Its pathway is carbohydrate biosynthesis; gluconeogenesis. The protein operates within carbohydrate degradation; glycolysis; D-glyceraldehyde 3-phosphate from glycerone phosphate: step 1/1. In terms of biological role, involved in the gluconeogenesis. Catalyzes stereospecifically the conversion of dihydroxyacetone phosphate (DHAP) to D-glyceraldehyde-3-phosphate (G3P). This Campylobacter jejuni subsp. doylei (strain ATCC BAA-1458 / RM4099 / 269.97) protein is Triosephosphate isomerase.